A 128-amino-acid polypeptide reads, in one-letter code: Translation initiation factor 5A (128 aa).

The residue at position 35 (lysine 35) is a Hypusine.

The protein belongs to the eIF-5A family.

Its subcellular location is the cytoplasm. In terms of biological role, functions by promoting the formation of the first peptide bond. This Methanocella arvoryzae (strain DSM 22066 / NBRC 105507 / MRE50) protein is Translation initiation factor 5A (eIF5A).